We begin with the raw amino-acid sequence, 67 residues long: LPS-assembly lipoprotein LptM (67 aa).

Residues 1–19 (MKNVFKTLAVLLTLFSLTG) form the signal peptide. A lipid anchor (N-palmitoyl cysteine) is attached at Cys-20. Cys-20 is lipidated: S-diacylglycerol cysteine. The segment at 26–67 (LYFPPADKNAPPPTKKVDSQTQSTMPDKNDRATGDGPSQVNY) is disordered.

Belongs to the LptM family. In terms of assembly, interacts with the outer membrane embedded portion of the LPS translocon formed by LptD and LptE (LptDE).

The protein resides in the cell outer membrane. Functionally, component of the lipopolysaccharide (LPS) transport (Lpt) pathway that promotes efficient assembly of the outer membrane LPS translocon (LptDE) by the BAM complex. Facilitates oxidative maturation of LptD by stabilizing a conformation of the LPS translocon in which LptD can efficiently acquire native disulfide bonds, thereby activating the LPS translocon. This chain is LPS-assembly lipoprotein LptM, found in Salmonella typhi.